The chain runs to 320 residues: o-succinylbenzoate synthase (320 aa).

Residue lysine 133 is the Proton donor of the active site. Residues aspartate 161, glutamate 190, and aspartate 213 each contribute to the Mg(2+) site. The active-site Proton acceptor is the lysine 235.

It belongs to the mandelate racemase/muconate lactonizing enzyme family. MenC type 1 subfamily. Requires a divalent metal cation as cofactor.

The enzyme catalyses (1R,6R)-6-hydroxy-2-succinyl-cyclohexa-2,4-diene-1-carboxylate = 2-succinylbenzoate + H2O. It participates in quinol/quinone metabolism; 1,4-dihydroxy-2-naphthoate biosynthesis; 1,4-dihydroxy-2-naphthoate from chorismate: step 4/7. Its pathway is quinol/quinone metabolism; menaquinone biosynthesis. Its function is as follows. Converts 2-succinyl-6-hydroxy-2,4-cyclohexadiene-1-carboxylate (SHCHC) to 2-succinylbenzoate (OSB). The chain is o-succinylbenzoate synthase from Escherichia coli O127:H6 (strain E2348/69 / EPEC).